The following is a 1379-amino-acid chain: Vascular endothelial growth factor receptor 3 (1379 aa).

An N-terminal signal peptide occupies residues 1–19 (MKRVCTLPLWLWLGIVSEA). The Extracellular portion of the chain corresponds to 20–788 (DLVSSYSMTP…EGSDDKTNVE (769 aa)). 7 consecutive Ig-like C2-type domains span residues 30 to 136 (PTLS…TAVS), 160 to 222 (KENT…IDNK), 240 to 335 (DIQL…TDVI), 340 to 421 (PFIN…KRIS), 430 to 566 (PRIH…FYVT), 569 to 684 (PDGF…KYIS), and 691 to 777 (PRLK…ASVS). Cystine bridges form between cysteine 51–cysteine 120 and cysteine 167–cysteine 215. Residues 73 to 93 (RRWNSQPQQRPVGAGNPEEDC) form a disordered region. 4 N-linked (GlcNAc...) asparagine glycosylation sites follow: asparagine 113, asparagine 175, asparagine 260, and asparagine 308. A disulfide bridge connects residues cysteine 261 and cysteine 319. 3 disulfides stabilise this stretch: cysteine 453/cysteine 548, cysteine 474/cysteine 500, and cysteine 592/cysteine 666. 7 N-linked (GlcNAc...) asparagine glycosylation sites follow: asparagine 529, asparagine 541, asparagine 596, asparagine 608, asparagine 655, asparagine 696, and asparagine 703. Residues cysteine 712 and cysteine 761 are joined by a disulfide bond. A glycan (N-linked (GlcNAc...) asparagine) is linked at asparagine 771. Residues 789 to 809 (IVILIGTGVIAVFFWILLIII) form a helical membrane-spanning segment. At 810–1379 (FCNIKRPAHA…LHASFFSEQY (570 aa)) the chain is on the cytoplasmic side. The Protein kinase domain maps to 858 to 1185 (LRLGKVLGHG…DLVEILGNLL (328 aa)). Residues 864-872 (LGHGAFGKV) and lysine 892 contribute to the ATP site. Residue aspartate 1049 is the Proton acceptor of the active site. Residues tyrosine 1075 and tyrosine 1080 each carry the phosphotyrosine; by autocatalysis modification. The segment at 1196 to 1224 (YIPLNDSHSSEDDGFSQVPSSAQQNSDEE) is disordered. Tyrosine 1239, tyrosine 1240, tyrosine 1274, tyrosine 1342, and tyrosine 1346 each carry phosphotyrosine; by autocatalysis. Residues 1299–1379 (RHRKEGGFSS…LHASFFSEQY (81 aa)) form a disordered region. Polar residues predominate over residues 1332–1343 (YGSQVGGQTFYN).

Belongs to the protein kinase superfamily. Tyr protein kinase family. CSF-1/PDGF receptor subfamily. In terms of assembly, interacts with VEGFC and VEGFD. Monomer in the absence of bound VEGFC or VEGFD. Homodimer in the presence of bound VEGFC or VEGFD. In terms of processing, autophosphorylated on tyrosine residues upon ligand binding. Autophosphorylation occurs in trans, i.e. one subunit of the dimeric receptor phosphorylates tyrosine residues on the other subunit.

Its subcellular location is the cell membrane. The protein resides in the cytoplasm. It is found in the nucleus. The enzyme catalyses L-tyrosyl-[protein] + ATP = O-phospho-L-tyrosyl-[protein] + ADP + H(+). With respect to regulation, present in an inactive conformation in the absence of bound ligand. Binding of VEGFC or VEGFD leads to dimerization and activation by autophosphorylation on tyrosine residues. Functionally, tyrosine-protein kinase that acts as a cell-surface receptor for VEGFC and VEGFD, and plays an essential role in lymphangiogenesis and in the development of the vascular network and the cardiovascular system during embryonic development. Promotes proliferation, survival and migration of endothelial cells, and regulates angiogenic sprouting. Mediates activation of the MAPK1/ERK2, MAPK3/ERK1 signaling pathway, of MAPK8 and the JUN signaling pathway, and of the AKT1 signaling pathway. The protein is Vascular endothelial growth factor receptor 3 (FLT4) of Coturnix coturnix (Common quail).